A 169-amino-acid polypeptide reads, in one-letter code: Peptide deformylase (169 aa).

2 residues coordinate Fe cation: C91 and H133. Residue E134 is part of the active site. Residue H137 participates in Fe cation binding.

It belongs to the polypeptide deformylase family. Requires Fe(2+) as cofactor.

The enzyme catalyses N-terminal N-formyl-L-methionyl-[peptide] + H2O = N-terminal L-methionyl-[peptide] + formate. In terms of biological role, removes the formyl group from the N-terminal Met of newly synthesized proteins. Requires at least a dipeptide for an efficient rate of reaction. N-terminal L-methionine is a prerequisite for activity but the enzyme has broad specificity at other positions. The sequence is that of Peptide deformylase from Salmonella agona (strain SL483).